A 756-amino-acid chain; its full sequence is Phosphoinositide 3-kinase regulatory subunit 6 (756 aa).

Disordered regions lie at residues Ser570 to Gly589 and Cys716 to Met738. Positions Ser717–Gly731 are enriched in polar residues.

As to quaternary structure, heterodimer of a catalytic subunit (PIK3CG) and a regulatory (PIK3R6) subunit. The binding of PIK3R6 to PIK3CG may exclude the binding of PIK3R5 to PIK3CG. Interacts with beta-gamma G protein dimers. Interacts with PDE3B and RAPGEF3; form a signaling complex that regulates phosphatidylinositol 3-kinase gamma in angiogenesis. Highly expressed in heart. In a lower extent, also expressed in brain, spleen, lung, liver, kidney, prostate, thyroid, salivary gland, dendritic cells, macrophages and neutrophils.

The protein localises to the cytoplasm. It localises to the cell membrane. Functionally, regulatory subunit of the PI3K gamma complex. Acts as an adapter to drive activation of PIK3CG by beta-gamma G protein dimers. The PIK3CG:PIK3R6 heterodimer is much less sensitive to beta-gamma G proteins than PIK3CG:PIK3R5 and its membrane recruitment and beta-gamma G protein dimer-dependent activation requires HRAS bound to PIK3CG. Recruits of the PI3K gamma complex to a PDE3B:RAPGEF3 signaling complex involved in angiogenesis; signaling seems to involve RRAS. The polypeptide is Phosphoinositide 3-kinase regulatory subunit 6 (Pik3r6) (Mus musculus (Mouse)).